The chain runs to 175 residues: MLTTGMFLLEGSLLSPNPGLIFWTAVTFLLLLLLLKKLAWGPILSALEEREKSIQSAIDRANSAKDDAEKLLSKNKDAMNKAEVEADRIIKEGKEYAEKMRNEIVTKAQEEAKKIAAQAKAEIEQEKQQALNALRDEVATLAVKGAEKIIRMNLDAEKHKAVVEGMLEDLSTKRN.

A helical transmembrane segment spans residues 13 to 33 (LLSPNPGLIFWTAVTFLLLLL).

It belongs to the ATPase B chain family. F-type ATPases have 2 components, F(1) - the catalytic core - and F(0) - the membrane proton channel. F(1) has five subunits: alpha(3), beta(3), gamma(1), delta(1), epsilon(1). F(0) has four main subunits: a(1), b(2) and c(10-14). The alpha and beta chains form an alternating ring which encloses part of the gamma chain. F(1) is attached to F(0) by a central stalk formed by the gamma and epsilon chains, while a peripheral stalk is formed by the delta and b chains.

It localises to the cell inner membrane. In terms of biological role, f(1)F(0) ATP synthase produces ATP from ADP in the presence of a proton or sodium gradient. F-type ATPases consist of two structural domains, F(1) containing the extramembraneous catalytic core and F(0) containing the membrane proton channel, linked together by a central stalk and a peripheral stalk. During catalysis, ATP synthesis in the catalytic domain of F(1) is coupled via a rotary mechanism of the central stalk subunits to proton translocation. Component of the F(0) channel, it forms part of the peripheral stalk, linking F(1) to F(0). The chain is ATP synthase subunit b from Chloroherpeton thalassium (strain ATCC 35110 / GB-78).